The primary structure comprises 37 residues: Large ribosomal subunit protein bL36c (37 aa).

It belongs to the bacterial ribosomal protein bL36 family.

The protein localises to the plastid. The chain is Large ribosomal subunit protein bL36c from Cuscuta gronovii (Common dodder).